Reading from the N-terminus, the 477-residue chain is Homeobox protein Meis2 (477 aa).

Residues Asp-71–Glu-191 are required for interaction with PBX1. Residues Gly-110–Asp-193 enclose the MEIS N-terminal domain. Residues Asp-193–Leu-203 show a composition bias toward basic and acidic residues. The segment at Asp-193–Phe-283 is disordered. Polar residues-rich tracts occupy residues Ser-204 to Ser-217 and Gly-239 to Gln-251. Positions Arg-276–Met-338 form a DNA-binding region, homeobox; TALE-type. Residues Leu-299–Arg-333 are interaction with DNA. Residues Asp-340–Gln-477 are transcriptional activation domain.

This sequence belongs to the TALE/MEIS homeobox family. In terms of assembly, monomer and homodimer. Heterodimer with HOXB13. Isoform Meis2A interacts with TLX1. Isoform Meis2B interacts with HOXA13 and PBX1 isoform PBX1b. Isoform Meis2D interacts with SP1, SP3 and KLF4. Isoform Meis2D interacts with PBX1 isoform PBX1a; the interaction partially relieves MEIS2 autoinhibition. Isoform Meis2B is part of a PDX1:PBX1b:MEIS2b complex; Meis2B is recruited by PBX1b and can be replaced by isoform Meis2D in a small fraction of complexes. Can form trimeric complexes including HOXB8 and PBX2 or PBX3. In terms of tissue distribution, displays spatially restricted expression patterns in the developing nervous system, limbs, face, and in various viscera. In adult, it is mainly expressed in the brain and female genital tract, with a different distribution of the alternative splice forms in these organs. Lower expression in lung and only basal level in heart, liver, kidney, spleen, and testis. Expressed in pancreatic islets (beta-cells only).

It is found in the nucleus. Its subcellular location is the cytoplasm. It localises to the perinuclear region. Its function is as follows. Involved in transcriptional regulation. Binds to HOX or PBX proteins to form dimers, or to a DNA-bound dimer of PBX and HOX proteins and thought to have a role in stabilization of the homeoprotein-DNA complex. Isoform Meis2B is required for the activity of a PDX1:PBX1b:MEIS2b complex in pancreatic acinar cells involved in the transcriptional activation of the ELA1 enhancer; the complex binds to the enhancer B element and cooperates with the transcription factor 1 complex (PTF1) bound to the enhancer A element; MEIS2 is not involved in complex DNA-binding. Probably in complex with PBX1, is involved in transcriptional regulation by KLF4. Isoforms Meis2B and Meis2D can bind to a EPHA8 promoter sequence containing the DNA motif 5'-CGGTCA-3'; in cooperation with a PBX protein (such as PBX2) is proposed to be involved in the transcriptional activation of EPHA8 in the developing midbrain. May be involved in regulation of myeloid differentiation. Can bind to the DNA sequence 5'-TGACAG-3'in the activator ACT sequence of the D(1A) dopamine receptor (DRD1) promoter and activate DRD1 transcription. This is Homeobox protein Meis2 (Meis2) from Mus musculus (Mouse).